The following is a 54-amino-acid chain: Photosystem II reaction center protein K (54 aa).

Positions 1–17 (MFQISLDMISNKINLLG) are excised as a propeptide. The helical transmembrane segment at 29–49 (IVDVLPIIPILFFLLAFVWQA) threads the bilayer.

This sequence belongs to the PsbK family. In terms of assembly, PSII is composed of 1 copy each of membrane proteins PsbA, PsbB, PsbC, PsbD, PsbE, PsbF, PsbH, PsbI, PsbJ, PsbK, PsbL, PsbM, PsbT, PsbY, PsbZ, Psb30/Ycf12, at least 3 peripheral proteins of the oxygen-evolving complex and a large number of cofactors. It forms dimeric complexes.

It localises to the plastid. It is found in the chloroplast thylakoid membrane. One of the components of the core complex of photosystem II (PSII). PSII is a light-driven water:plastoquinone oxidoreductase that uses light energy to abstract electrons from H(2)O, generating O(2) and a proton gradient subsequently used for ATP formation. It consists of a core antenna complex that captures photons, and an electron transfer chain that converts photonic excitation into a charge separation. This Euglena stellata protein is Photosystem II reaction center protein K.